The sequence spans 193 residues: MAKKQSILSPIIRITFTFLVLCGLVYPLIVTGIAQAVMKDNADGSLIYNDKNEVIGSKLIGQNFTDPRYFHGRVSSIEYKAEASGSNNYAPSNPDLEKRVEKSIEEWKKQNPSVPVTEVPIDLVTNSGSGLDPDISPKAASVQVERISKITNIPKETLNQLIKEQTEGAALGLFGENRVNVLKLNLELQKLLK.

The chain crosses the membrane as a helical span at residues 14 to 34 (ITFTFLVLCGLVYPLIVTGIA).

Belongs to the KdpC family. As to quaternary structure, the system is composed of three essential subunits: KdpA, KdpB and KdpC.

It localises to the cell membrane. Functionally, part of the high-affinity ATP-driven potassium transport (or Kdp) system, which catalyzes the hydrolysis of ATP coupled with the electrogenic transport of potassium into the cytoplasm. This subunit acts as a catalytic chaperone that increases the ATP-binding affinity of the ATP-hydrolyzing subunit KdpB by the formation of a transient KdpB/KdpC/ATP ternary complex. This Bacillus cereus (strain Q1) protein is Potassium-transporting ATPase KdpC subunit.